A 74-amino-acid polypeptide reads, in one-letter code: Translation initiation factor IF-1 (74 aa).

Residues 1–72 form the S1-like domain; the sequence is MAKQDAIEME…TKGRITYRLR (72 aa).

Belongs to the IF-1 family. Component of the 30S ribosomal translation pre-initiation complex which assembles on the 30S ribosome in the order IF-2 and IF-3, IF-1 and N-formylmethionyl-tRNA(fMet); mRNA recruitment can occur at any time during PIC assembly.

The protein localises to the cytoplasm. Its function is as follows. One of the essential components for the initiation of protein synthesis. Stabilizes the binding of IF-2 and IF-3 on the 30S subunit to which N-formylmethionyl-tRNA(fMet) subsequently binds. Helps modulate mRNA selection, yielding the 30S pre-initiation complex (PIC). Upon addition of the 50S ribosomal subunit IF-1, IF-2 and IF-3 are released leaving the mature 70S translation initiation complex. The polypeptide is Translation initiation factor IF-1 (Acaryochloris marina (strain MBIC 11017)).